A 178-amino-acid polypeptide reads, in one-letter code: Large ribosomal subunit protein bL35m (178 aa).

This sequence belongs to the bacterial ribosomal protein bL35 family.

The protein resides in the mitochondrion. The protein is Large ribosomal subunit protein bL35m (mRpL35) of Drosophila melanogaster (Fruit fly).